The sequence spans 527 residues: Berberine bridge enzyme-like 10 (527 aa).

Positions 1–20 are cleaved as a signal peptide; it reads MEKLLVISLLLLISTSVTTS. Cysteines 32 and 95 form a disulfide. A glycan (N-linked (GlcNAc...) asparagine) is linked at Asn53. The region spanning 73-248 is the FAD-binding PCMH-type domain; it reads TTPKPISVVA…LGYKIQLVPV (176 aa). Residue His110 is modified to Pros-8alpha-FAD histidine. Asn137 and Asn293 each carry an N-linked (GlcNAc...) asparagine glycan.

It belongs to the oxygen-dependent FAD-linked oxidoreductase family. The cofactor is FAD.

Its subcellular location is the secreted. The protein resides in the cell wall. This Arabidopsis thaliana (Mouse-ear cress) protein is Berberine bridge enzyme-like 10.